The following is a 125-amino-acid chain: MRLAGVNLPLNKHAVIALTHVYGIGRTSAENILRKAGIAYDKKISELSDEEAHAIREIIAEEYKVEGQARGEQQTAIKRLMDIGCYRGLRHRRSLPVRGQRTRTNARTRKGKRKTVAGKKKAVKK.

Positions 94 to 125 are disordered; sequence SLPVRGQRTRTNARTRKGKRKTVAGKKKAVKK.

The protein belongs to the universal ribosomal protein uS13 family. Part of the 30S ribosomal subunit. Forms a loose heterodimer with protein S19. Forms two bridges to the 50S subunit in the 70S ribosome.

In terms of biological role, located at the top of the head of the 30S subunit, it contacts several helices of the 16S rRNA. In the 70S ribosome it contacts the 23S rRNA (bridge B1a) and protein L5 of the 50S subunit (bridge B1b), connecting the 2 subunits; these bridges are implicated in subunit movement. Contacts the tRNAs in the A and P-sites. This Chlorobium chlorochromatii (strain CaD3) protein is Small ribosomal subunit protein uS13.